The following is a 212-amino-acid chain: MNIFRLTGDLSHLAAIVILLLKIWKTRSCAGISGKSQLLFALVFTTRYLDLFTSFISLYNTSMKVIYLACSYATVYLIYLKFKATYDGNHDTFRVEFLVVPVGGLSFLVNHDFSPLEILWTFSIYLESVAILPQLFMISKTGEAETITTHYLFFLGLYRALYLVNWIWRFYFEGFFDLIAVVAGVVQTILYCDFFYLYITKVLKGKKLSLPA.

Topologically, residues 1-4 are lumenal; the sequence is MNIF. A helical transmembrane segment spans residues 5-24; that stretch reads RLTGDLSHLAAIVILLLKIW. The Cytoplasmic segment spans residues 25–32; it reads KTRSCAGI. The helical transmembrane segment at 33–52 threads the bilayer; the sequence is SGKSQLLFALVFTTRYLDLF. The tract at residues 47–48 is interaction with the K-D-E-L motif on target proteins; the sequence is RY. The Lumenal portion of the chain corresponds to 53-58; that stretch reads TSFISL. The helical transmembrane segment at 59 to 79 threads the bilayer; it reads YNTSMKVIYLACSYATVYLIY. The Cytoplasmic portion of the chain corresponds to 80–92; that stretch reads LKFKATYDGNHDT. Residues 93–110 form a helical membrane-spanning segment; it reads FRVEFLVVPVGGLSFLVN. Over 111–116 the chain is Lumenal; the sequence is HDFSPL. Residues 117 to 135 form a helical membrane-spanning segment; it reads EILWTFSIYLESVAILPQL. At 136-149 the chain is on the cytoplasmic side; the sequence is FMISKTGEAETITT. A helical transmembrane segment spans residues 150 to 168; sequence HYLFFLGLYRALYLVNWIW. The interval 159–169 is interaction with the K-D-E-L motif on target proteins; the sequence is RALYLVNWIWR. Over 169–178 the chain is Lumenal; that stretch reads RFYFEGFFDL. Residues 179 to 199 form a helical membrane-spanning segment; it reads IAVVAGVVQTILYCDFFYLYI. At 200–212 the chain is on the cytoplasmic side; sequence TKVLKGKKLSLPA. Residues 204–207 form an important for recycling of cargo proteins with the sequence motif K-D-E-L from the Golgi to the endoplasmic reticulum region; the sequence is KGKK.

It belongs to the ERD2 family.

It localises to the endoplasmic reticulum membrane. The protein resides in the golgi apparatus membrane. The protein localises to the cytoplasmic vesicle. It is found in the COPI-coated vesicle membrane. Membrane receptor that binds the K-D-E-L sequence motif in the C-terminal part of endoplasmic reticulum resident proteins and maintains their localization in that compartment by participating to their vesicle-mediated recycling back from the Golgi. Binding is pH dependent, and is optimal at pH 5-5.4. The polypeptide is ER lumen protein-retaining receptor 2 (KDELR2) (Homo sapiens (Human)).